The chain runs to 156 residues: Transcription antitermination protein NusB (156 aa).

Belongs to the NusB family.

Its function is as follows. Involved in transcription antitermination. Required for transcription of ribosomal RNA (rRNA) genes. Binds specifically to the boxA antiterminator sequence of the ribosomal RNA (rrn) operons. This chain is Transcription antitermination protein NusB, found in Syntrophotalea carbinolica (strain DSM 2380 / NBRC 103641 / GraBd1) (Pelobacter carbinolicus).